Here is a 355-residue protein sequence, read N- to C-terminus: NADH-quinone oxidoreductase subunit H (355 aa).

8 helical membrane-spanning segments follow: residues 25 to 45 (VVRI…LILW), 91 to 111 (WLYL…WAVI), 126 to 146 (LLYA…AGWA), 170 to 190 (MGFA…SEIV), 205 to 225 (FLSW…ISGI), 253 to 273 (MAFA…SALA), 290 to 310 (FIPG…VFIW), and 330 to 350 (VFLP…MSPL).

Belongs to the complex I subunit 1 family. As to quaternary structure, NDH-1 is composed of 14 different subunits. Subunits NuoA, H, J, K, L, M, N constitute the membrane sector of the complex.

Its subcellular location is the cell inner membrane. It carries out the reaction a quinone + NADH + 5 H(+)(in) = a quinol + NAD(+) + 4 H(+)(out). In terms of biological role, NDH-1 shuttles electrons from NADH, via FMN and iron-sulfur (Fe-S) centers, to quinones in the respiratory chain. The immediate electron acceptor for the enzyme in this species is believed to be ubiquinone. Couples the redox reaction to proton translocation (for every two electrons transferred, four hydrogen ions are translocated across the cytoplasmic membrane), and thus conserves the redox energy in a proton gradient. This subunit may bind ubiquinone. This Burkholderia cenocepacia (strain HI2424) protein is NADH-quinone oxidoreductase subunit H.